Reading from the N-terminus, the 252-residue chain is Pyridoxine 5'-phosphate synthase (252 aa).

Asn12 contacts 3-amino-2-oxopropyl phosphate. 14 to 15 is a 1-deoxy-D-xylulose 5-phosphate binding site; it reads DH. Arg23 is a 3-amino-2-oxopropyl phosphate binding site. The active-site Proton acceptor is His48. 2 residues coordinate 1-deoxy-D-xylulose 5-phosphate: Arg50 and His55. The active-site Proton acceptor is the Glu75. Thr105 is a 1-deoxy-D-xylulose 5-phosphate binding site. The active-site Proton donor is His199. Residues Gly200 and 221-222 each bind 3-amino-2-oxopropyl phosphate; that span reads GH.

This sequence belongs to the PNP synthase family. In terms of assembly, homooctamer; tetramer of dimers.

Its subcellular location is the cytoplasm. It carries out the reaction 3-amino-2-oxopropyl phosphate + 1-deoxy-D-xylulose 5-phosphate = pyridoxine 5'-phosphate + phosphate + 2 H2O + H(+). Its pathway is cofactor biosynthesis; pyridoxine 5'-phosphate biosynthesis; pyridoxine 5'-phosphate from D-erythrose 4-phosphate: step 5/5. Catalyzes the complicated ring closure reaction between the two acyclic compounds 1-deoxy-D-xylulose-5-phosphate (DXP) and 3-amino-2-oxopropyl phosphate (1-amino-acetone-3-phosphate or AAP) to form pyridoxine 5'-phosphate (PNP) and inorganic phosphate. This is Pyridoxine 5'-phosphate synthase from Cereibacter sphaeroides (strain ATCC 17029 / ATH 2.4.9) (Rhodobacter sphaeroides).